A 510-amino-acid chain; its full sequence is Ribose import ATP-binding protein RbsA 1 (510 aa).

ABC transporter domains are found at residues 20–256 (LEMR…VGRD) and 266–510 (VTLG…TGNA). 52–59 (GENGAGKS) lines the ATP pocket.

The protein belongs to the ABC transporter superfamily. Ribose importer (TC 3.A.1.2.1) family. As to quaternary structure, the complex is composed of an ATP-binding protein (RbsA), two transmembrane proteins (RbsC) and a solute-binding protein (RbsB).

Its subcellular location is the cell inner membrane. The enzyme catalyses D-ribose(out) + ATP + H2O = D-ribose(in) + ADP + phosphate + H(+). In terms of biological role, part of the ABC transporter complex RbsABC involved in ribose import. Responsible for energy coupling to the transport system. The sequence is that of Ribose import ATP-binding protein RbsA 1 from Agrobacterium fabrum (strain C58 / ATCC 33970) (Agrobacterium tumefaciens (strain C58)).